Reading from the N-terminus, the 432-residue chain is MGKSVVVLGAQWGDEGKGKIVDLLTDRVKYVVRYQGGHNAGHTLIINGEKTVLRLIPSGILRENVTCLIGNGVVLSPTALMQEMGELESRGINVRERLLISEACPLILPYHVAMDKARESALGNKAIGTTGRGIGPAYEDKVARRGLRVGDLFDKQSFAEKLKNILDYYNFQLVNYYKVEAVDYQKTLDEVLAVADIITAMVADVTTILDVARKNGDNILFEGAQGTMLDIDQGTYPYVTSSNTTAGGVSTGAGFGPRHIDYVLGIIKAYCTRVGGGPFTTELFDEVGAEIARKGNEFGAVTGRPRRCGWFDAVAIKRAIQTNSISGFCMTKLDVLDGFREVKICVGYKMPNGEIAEYAPLAAKDWEGVEPIYETLPGWQENTFGITDVNQLPENTRNYIKRIEEVTGVPIAILSTGPDRVETMILNDPFAV.

GTP contacts are provided by residues 13 to 19 and 41 to 43; these read GDEGKGK and GHT. Aspartate 14 serves as the catalytic Proton acceptor. Residues aspartate 14 and glycine 41 each coordinate Mg(2+). IMP contacts are provided by residues 14 to 17, 39 to 42, threonine 130, arginine 144, glutamine 225, threonine 240, and arginine 304; these read DEGK and NAGH. Histidine 42 acts as the Proton donor in catalysis. Residue 300–306 participates in substrate binding; sequence AVTGRPR. GTP is bound by residues arginine 306, 332–334, and 415–417; these read KLD and STG.

The protein belongs to the adenylosuccinate synthetase family. Homodimer. Mg(2+) is required as a cofactor.

The protein localises to the cytoplasm. It carries out the reaction IMP + L-aspartate + GTP = N(6)-(1,2-dicarboxyethyl)-AMP + GDP + phosphate + 2 H(+). The protein operates within purine metabolism; AMP biosynthesis via de novo pathway; AMP from IMP: step 1/2. Plays an important role in the de novo pathway of purine nucleotide biosynthesis. Catalyzes the first committed step in the biosynthesis of AMP from IMP. The protein is Adenylosuccinate synthetase of Histophilus somni (strain 2336) (Haemophilus somnus).